Consider the following 121-residue polypeptide: Small ribosomal subunit protein uS13 (121 aa).

Residues 91–121 form a disordered region; the sequence is HRRGLPVRGQKTKNNARTRKGPVKTVANKKK.

It belongs to the universal ribosomal protein uS13 family. In terms of assembly, part of the 30S ribosomal subunit. Forms a loose heterodimer with protein S19. Forms two bridges to the 50S subunit in the 70S ribosome.

Functionally, located at the top of the head of the 30S subunit, it contacts several helices of the 16S rRNA. In the 70S ribosome it contacts the 23S rRNA (bridge B1a) and protein L5 of the 50S subunit (bridge B1b), connecting the 2 subunits; these bridges are implicated in subunit movement. Contacts the tRNAs in the A and P-sites. In Staphylococcus carnosus (strain TM300), this protein is Small ribosomal subunit protein uS13.